The chain runs to 302 residues: 4-hydroxy-tetrahydrodipicolinate synthase (302 aa).

Thr55 provides a ligand contact to pyruvate. Tyr144 acts as the Proton donor/acceptor in catalysis. Lys172 functions as the Schiff-base intermediate with substrate in the catalytic mechanism. Val214 serves as a coordination point for pyruvate.

Belongs to the DapA family. In terms of assembly, homotetramer; dimer of dimers.

It localises to the cytoplasm. The catalysed reaction is L-aspartate 4-semialdehyde + pyruvate = (2S,4S)-4-hydroxy-2,3,4,5-tetrahydrodipicolinate + H2O + H(+). The protein operates within amino-acid biosynthesis; L-lysine biosynthesis via DAP pathway; (S)-tetrahydrodipicolinate from L-aspartate: step 3/4. In terms of biological role, catalyzes the condensation of (S)-aspartate-beta-semialdehyde [(S)-ASA] and pyruvate to 4-hydroxy-tetrahydrodipicolinate (HTPA). This is 4-hydroxy-tetrahydrodipicolinate synthase from Synechococcus sp. (strain CC9902).